The following is a 425-amino-acid chain: Enolase (425 aa).

Q170 provides a ligand contact to (2R)-2-phosphoglycerate. E214 serves as the catalytic Proton donor. D250, E291, and D317 together coordinate Mg(2+). K342, R371, S372, and K393 together coordinate (2R)-2-phosphoglycerate. K342 functions as the Proton acceptor in the catalytic mechanism.

It belongs to the enolase family. Mg(2+) serves as cofactor.

It localises to the cytoplasm. The protein resides in the secreted. Its subcellular location is the cell surface. It catalyses the reaction (2R)-2-phosphoglycerate = phosphoenolpyruvate + H2O. It functions in the pathway carbohydrate degradation; glycolysis; pyruvate from D-glyceraldehyde 3-phosphate: step 4/5. Its function is as follows. Catalyzes the reversible conversion of 2-phosphoglycerate (2-PG) into phosphoenolpyruvate (PEP). It is essential for the degradation of carbohydrates via glycolysis. The sequence is that of Enolase from Methanococcoides burtonii (strain DSM 6242 / NBRC 107633 / OCM 468 / ACE-M).